Here is a 231-residue protein sequence, read N- to C-terminus: Uracil-DNA glycosylase (231 aa).

Asp-70 functions as the Proton acceptor in the catalytic mechanism.

This sequence belongs to the uracil-DNA glycosylase (UDG) superfamily. UNG family.

It is found in the cytoplasm. The catalysed reaction is Hydrolyzes single-stranded DNA or mismatched double-stranded DNA and polynucleotides, releasing free uracil.. Excises uracil residues from the DNA which can arise as a result of misincorporation of dUMP residues by DNA polymerase or due to deamination of cytosine. The protein is Uracil-DNA glycosylase of Pseudomonas fluorescens (strain Pf0-1).